The primary structure comprises 163 residues: Cyclic pyranopterin monophosphate synthase (163 aa).

Substrate-binding positions include 76-78 and 114-115; these read LCH and ME. Residue Asp-129 is part of the active site.

The protein belongs to the MoaC family. In terms of assembly, homohexamer; trimer of dimers.

It carries out the reaction (8S)-3',8-cyclo-7,8-dihydroguanosine 5'-triphosphate = cyclic pyranopterin phosphate + diphosphate. It functions in the pathway cofactor biosynthesis; molybdopterin biosynthesis. Its function is as follows. Catalyzes the conversion of (8S)-3',8-cyclo-7,8-dihydroguanosine 5'-triphosphate to cyclic pyranopterin monophosphate (cPMP). In Desulfovibrio desulfuricans (strain ATCC 27774 / DSM 6949 / MB), this protein is Cyclic pyranopterin monophosphate synthase.